The chain runs to 104 residues: MKSMIAAILFALVATSLAGYLGYAGYGGPYGGYGAFGFRGVPVGRAVAYSSSIRHPGYGYGLGLGYGGLGYGLGYGGYGGYGLGYGYGGYGLGLGHGLGLGKVW.

Residues 1–18 form the signal peptide; it reads MKSMIAAILFALVATSLA.

It belongs to the non-disulfide-bridged peptide (NDBP) superfamily. As to expression, expressed by the venom gland.

It localises to the secreted. The polypeptide is Glycine-rich protein (Lychas mucronatus (Chinese swimming scorpion)).